Consider the following 1459-residue polypeptide: PPE family protein PPE34 (1459 aa).

Belongs to the mycobacterial PPE family. Interacts with human TLR2.

Its subcellular location is the cell membrane. The protein resides in the secreted. It is found in the cell wall. The protein localises to the cell surface. Functionally, facilitates a shift in the ensuing immunity toward the Th2 phenotype and could aid in immune evasion by mycobacteria. Interacts with human Toll-like receptor 2 (TLR2) and triggers functional maturation of human dendritic cells (DCs), leading to secretion of IL-4, IL-5 and IL-10 from CD4(+) T cells and induction of Th2 immune response. Maturation of DCs involves PI3K, ERK1/2, p38 MAPK and NF-kappa-B signaling pathways. This is PPE family protein PPE34 from Mycobacterium tuberculosis (strain ATCC 25618 / H37Rv).